Consider the following 199-residue polypeptide: MGFLVAVMNFSPTLVHHHMKSKPQCQNEKLRQGQTSSLFDRRGFLKCVVGASSFMATIEFSGLQAQASEEKLDEGEGVVGAFKTLFDPNERTKSGKELPKAYLKSAREVVKTMRESLKENPKDNAKFRRSADAAKESIRDYLSNWRGQKTVAGEESYVELENVIRALAKFYSKAGPSAPLPDEVKTEILDDLNKAEEFL.

This sequence belongs to the Psb27 family. In terms of assembly, interacts with the C-terminus of both the precursor and mature form of D1.

It localises to the plastid. The protein resides in the chloroplast thylakoid lumen. Functionally, required, but not essential, for D1 (psbA) precursor processing and thus correct photosystem II assembly (PSII). This is Photosystem II D1 precursor processing protein PSB27-H2, chloroplastic (PSB27-2) from Arabidopsis thaliana (Mouse-ear cress).